Here is a 514-residue protein sequence, read N- to C-terminus: Cytochrome P450 94A1 (514 aa).

The helical transmembrane segment at 7 to 29 threads the bilayer; sequence EVLLPYLLPLLLLILPTTIFFLT. Cys-458 is a binding site for heme.

This sequence belongs to the cytochrome P450 family. Heme serves as cofactor.

Its subcellular location is the endoplasmic reticulum membrane. Catalyzes the omega-hydroxylation of various fatty acids (FA) from 10 to 18 carbon atoms. The substrate specificity is higher for laurate &gt; palmitate &gt; myristate &gt; linolenate &gt; linoleate &gt; oleate &gt; caprate. May play a minor role in cutin synthesis and could be involved in plant defense. In Vicia sativa (Spring vetch), this protein is Cytochrome P450 94A1 (CYP94A1).